Consider the following 418-residue polypeptide: Gamma-glutamyl phosphate reductase (418 aa).

It belongs to the gamma-glutamyl phosphate reductase family.

Its subcellular location is the cytoplasm. The catalysed reaction is L-glutamate 5-semialdehyde + phosphate + NADP(+) = L-glutamyl 5-phosphate + NADPH + H(+). Its pathway is amino-acid biosynthesis; L-proline biosynthesis; L-glutamate 5-semialdehyde from L-glutamate: step 2/2. Catalyzes the NADPH-dependent reduction of L-glutamate 5-phosphate into L-glutamate 5-semialdehyde and phosphate. The product spontaneously undergoes cyclization to form 1-pyrroline-5-carboxylate. This Desulforapulum autotrophicum (strain ATCC 43914 / DSM 3382 / VKM B-1955 / HRM2) (Desulfobacterium autotrophicum) protein is Gamma-glutamyl phosphate reductase.